Consider the following 337-residue polypeptide: U11/U12 small nuclear ribonucleoprotein 48 kDa protein (337 aa).

The CHHC U11-48K-type zinc-finger motif lies at 55–82 (IAICPYDSNHRMPKSSLTKHMESCRLRK). The Zn(2+) site is built by Cys-58, His-64, His-74, and Cys-78. Glycyl lysine isopeptide (Lys-Gly) (interchain with G-Cter in SUMO2) cross-links involve residues Lys-87 and Lys-104. Positions 255-276 (HWQEEQGRAGDAAEKNEERRSA) are enriched in basic and acidic residues. The interval 255 to 337 (HWQEEQGRAG…HSHKRRKQKI (83 aa)) is disordered. Basic residues predominate over residues 294–310 (RHRRARSRSPHKRKRNK). Residues 311 to 326 (DKSSESRRRKERDGER) show a composition bias toward basic and acidic residues. Positions 327-337 (HHSHKRRKQKI) are enriched in basic residues.

As to quaternary structure, component of the U11/U12 snRNPs that are part of the U12-type spliceosome. Not found in the major spliceosome.

The protein localises to the nucleus. Functionally, likely involved in U12-type 5' splice site recognition. This Mus musculus (Mouse) protein is U11/U12 small nuclear ribonucleoprotein 48 kDa protein (Snrnp48).